Here is a 123-residue protein sequence, read N- to C-terminus: Small ribosomal subunit protein uS12 (123 aa).

This sequence belongs to the universal ribosomal protein uS12 family. Part of the 30S ribosomal subunit. Contacts proteins S8 and S17. May interact with IF1 in the 30S initiation complex.

In terms of biological role, with S4 and S5 plays an important role in translational accuracy. Functionally, interacts with and stabilizes bases of the 16S rRNA that are involved in tRNA selection in the A site and with the mRNA backbone. Located at the interface of the 30S and 50S subunits, it traverses the body of the 30S subunit contacting proteins on the other side and probably holding the rRNA structure together. The combined cluster of proteins S8, S12 and S17 appears to hold together the shoulder and platform of the 30S subunit. The sequence is that of Small ribosomal subunit protein uS12 from Corynebacterium diphtheriae (strain ATCC 700971 / NCTC 13129 / Biotype gravis).